Reading from the N-terminus, the 58-residue chain is Ikitoxin (58 aa).

One can recognise an LCN-type CS-alpha/beta domain in the interval 3–58; sequence VPGNYPLDKDGNTYKCFLLGENEECLNVCKLHGVQYGYCYASKCWCEYLEDDKDSV. 3 cysteine pairs are disulfide-bonded: C18–C41, C27–C46, and C31–C48.

Expressed by the venom gland.

The protein resides in the secreted. Beta toxins bind voltage-independently at site-4 of sodium channels (Nav) and shift the voltage of activation toward more negative potentials thereby affecting sodium channel activation and promoting spontaneous and repetitive firing. Does not produce effect when administered to blowfly and cabbage looper larvae. In mice, does not produce convulsions, tremors, increased ventilation nor death. The protein is Ikitoxin of Parabuthus transvaalicus (Transvaal thick-tailed scorpion).